A 417-amino-acid chain; its full sequence is Voltage-gated potassium channel Kch (417 aa).

The Cytoplasmic segment spans residues 1–21; sequence MSHWATFKQTATNLWVTLRHD. A helical membrane pass occupies residues 22 to 41; that stretch reads ILALAVFLNGLLIFKTIYGM. Topologically, residues 42–63 are periplasmic; it reads SVNLLDIFHIKAFSELDLSLLA. Residues 64–83 form a helical membrane-spanning segment; the sequence is NAPLFMLGVFLVLNSIGLLF. At 84-86 the chain is on the cytoplasmic side; the sequence is RAK. A helical membrane pass occupies residues 87-104; sequence LAWAISIILLLIALIYTL. Residues 105–110 lie on the Periplasmic side of the membrane; it reads HFYPWL. Residues 111 to 127 form a helical membrane-spanning segment; that stretch reads KFSIGFCIFTLVFLLIL. At 128–140 the chain is on the cytoplasmic side; the sequence is RKDFSHSSAAAGT. A helical transmembrane segment spans residues 141–160; that stretch reads IFAFISFTTLLFYSTYGALY. The Periplasmic portion of the chain corresponds to 161–199; that stretch reads LSEGFNPRIESLMTAFYFSIETMSTVGYGDIVPVSESAR. The Selectivity filter motif lies at 185–190; sequence TVGYGD. A helical transmembrane segment spans residues 200 to 220; it reads LFTISVIISGITVFATSMTSI. The Cytoplasmic portion of the chain corresponds to 221–417; that stretch reads FGPLIRGGFN…KADSKESAQK (197 aa). Positions 243-363 constitute an RCK N-terminal domain; sequence KDHFIVCGHS…IKMVHPDIIL (121 aa).

The protein belongs to the potassium channel family. As to quaternary structure, dimer.

The protein localises to the cell inner membrane. Functionally, k(+)-specific ion channel. May play a role in the defense against osmotic shock. This is Voltage-gated potassium channel Kch (kch) from Escherichia coli (strain K12).